The primary structure comprises 785 residues: Altered inheritance of mitochondria protein 3-2 (785 aa).

Disordered stretches follow at residues 33–122 (TGYQ…QPYM), 142–406 (QQVA…SENL), and 418–785 (NVDV…RLHK). Low complexity predominate over residues 91–102 (GSSGNSANGSSA). 2 stretches are compositionally biased toward polar residues: residues 103-122 (TIPT…QPYM) and 143-199 (QVAT…QLNI). Basic and acidic residues predominate over residues 249–260 (KPYDWEEQKTTK). Composition is skewed to polar residues over residues 283 to 310 (SRQG…TTTG), 350 to 366 (ATNN…QNTK), 375 to 388 (TNKS…SNVM), 395 to 405 (QMNTKANSSEN), and 455 to 465 (SSISRDNYNSI). Positions 478–497 (NTGEREGAQELKADIAERSQ) are enriched in basic and acidic residues. A compositionally biased stretch (polar residues) spans 527-556 (AQTSSDIPQKSSLVTDESNISVPNKSQQPM). Composition is skewed to basic and acidic residues over residues 587 to 613 (KSLE…EQLK) and 624 to 637 (KNMK…DNKN). Residues 659-671 (SLTSEGNHMNLNT) are compositionally biased toward polar residues. Composition is skewed to basic and acidic residues over residues 672-686 (EKGK…DESK) and 700-710 (FKREELSKEVV).

It belongs to the AIM3 family.

Its subcellular location is the membrane raft. The polypeptide is Altered inheritance of mitochondria protein 3-2 (AIM3-2) (Candida glabrata (strain ATCC 2001 / BCRC 20586 / JCM 3761 / NBRC 0622 / NRRL Y-65 / CBS 138) (Yeast)).